The primary structure comprises 706 residues: DNA helicase/primase complex-associated protein (706 aa).

Residues 203-249 are disordered; that stretch reads CPGGDGGEEGDGAEGGDGGVGGAGDGAGAGGGSSGKPPAGKRGRPTR. Positions 217–236 are enriched in gly residues; that stretch reads GGDGGVGGAGDGAGAGGGSS.

The protein belongs to the herpesviridae HEPA family. In terms of assembly, associates with the primase and the helicase to form the helicase-primase complex. Interacts with the origin-binding protein. Interacts with the polymerase catalytic subunit.

It localises to the host nucleus. Functionally, component of the helicase/primase complex. Unwinds the DNA at the replication forks and generates single-stranded DNA for both leading and lagging strand synthesis. The primase synthesizes short RNA primers on the lagging strand that the polymerase presumably elongates using dNTPs. The primase-associated factor has no known catalytic activity in the complex and may serve to facilitate the formation of the replisome by directly interacting with the origin-binding protein and the polymerase. The polypeptide is DNA helicase/primase complex-associated protein (40) (Equus caballus (Horse)).